The sequence spans 258 residues: Acyl-[acyl-carrier-protein]--UDP-N-acetylglucosamine O-acyltransferase (258 aa).

This sequence belongs to the transferase hexapeptide repeat family. LpxA subfamily. As to quaternary structure, homotrimer.

Its subcellular location is the cytoplasm. It catalyses the reaction a (3R)-hydroxyacyl-[ACP] + UDP-N-acetyl-alpha-D-glucosamine = a UDP-3-O-[(3R)-3-hydroxyacyl]-N-acetyl-alpha-D-glucosamine + holo-[ACP]. It functions in the pathway glycolipid biosynthesis; lipid IV(A) biosynthesis; lipid IV(A) from (3R)-3-hydroxytetradecanoyl-[acyl-carrier-protein] and UDP-N-acetyl-alpha-D-glucosamine: step 1/6. Its function is as follows. Involved in the biosynthesis of lipid A, a phosphorylated glycolipid that anchors the lipopolysaccharide to the outer membrane of the cell. In Ectopseudomonas mendocina (strain ymp) (Pseudomonas mendocina), this protein is Acyl-[acyl-carrier-protein]--UDP-N-acetylglucosamine O-acyltransferase.